Here is a 384-residue protein sequence, read N- to C-terminus: MNNKNIMIVGAGFSGVVIARQLAEQGYTVKIIDRRDHIGGNSYDTRDPQTDVMVHVYGPHIFHTDNETVWNYVNQYAEMMPYVNRVKATVNGQVFSLPINLHTINQFFAKTCSPDEARALISEKGDSSIVEPQTFEEQALRFIGKELYEAFFKGYTIKQWGMEPSELPASILKRLPVRFNYDDNYFNHKFQGMPKLGYTRMIEAIADHENISIELQREFLPEEREDYAHVFYSGPLDAFYSYQYGRLGYRTLDFEKFTYQGDYQGCAVMNYCSIDVPYTRITEHKYFSPWESHEGSVCYKEYSRACGENDIPYYPIRQMGEMALLEKYLSLAESEKNITFVGRLGTYRYLDMDVTIAEALKTADEFLSSVANQEEMPVFTVPVR.

Residues 1 to 19 (MNNKNIMIVGAGFSGVVIA) form the signal peptide. FAD contacts are provided by residues serine 14, 33–34 (DR), asparagine 41, and 60–61 (HI). 5 residues coordinate UDP-alpha-D-galactose: asparagine 84, phenylalanine 151, threonine 156, tryptophan 160, and tyrosine 185. FAD is bound at residue phenylalanine 219. UDP-alpha-D-galactose is bound by residues asparagine 270, arginine 280, and tyrosine 314. Residue arginine 343 coordinates FAD. UDP-alpha-D-galactose is bound at residue tyrosine 349. FAD is bound at residue 350-355 (LDMDVT).

This sequence belongs to the UDP-galactopyranose/dTDP-fucopyranose mutase family. As to quaternary structure, homodimer. It depends on FAD as a cofactor.

The catalysed reaction is UDP-alpha-D-galactose = UDP-alpha-D-galactofuranose. It functions in the pathway bacterial outer membrane biogenesis; LPS O-antigen biosynthesis. Catalyzes the interconversion through a 2-keto intermediate of uridine diphosphogalactopyranose (UDP-GalP) into uridine diphosphogalactofuranose (UDP-GalF). This chain is Probable UDP-galactopyranose mutase (rfbD), found in Klebsiella pneumoniae.